The following is a 64-amino-acid chain: Large ribosomal subunit protein bL33 (64 aa).

This sequence belongs to the bacterial ribosomal protein bL33 family.

The polypeptide is Large ribosomal subunit protein bL33 (Parasynechococcus marenigrum (strain WH8102)).